A 770-amino-acid polypeptide reads, in one-letter code: Probable methyltransferase PMT24 (770 aa).

Topologically, residues 1–17 (MAMGKYSRVDGKKSSGY) are cytoplasmic. A helical; Signal-anchor for type II membrane protein transmembrane segment spans residues 18–38 (GLTITIVLIVSLCLVGAWMFM). At 39–770 (SSWSAPTESI…EAETIQSAIA (732 aa)) the chain is on the lumenal side. Basic and acidic residues-rich tracts occupy residues 54–81 (ERTK…FPDE) and 93–164 (NEEK…KSED). Residues 54–223 (ERTKDVDTTK…STGSGAWSTQ (170 aa)) form a disordered region. N-linked (GlcNAc...) asparagine glycosylation is found at Asn160 and Asn166. A compositionally biased stretch (polar residues) spans 212–223 (ESSTGSGAWSTQ). N-linked (GlcNAc...) asparagine glycosylation is found at Asn244 and Asn363.

The protein belongs to the methyltransferase superfamily.

It is found in the golgi apparatus membrane. The sequence is that of Probable methyltransferase PMT24 from Arabidopsis thaliana (Mouse-ear cress).